The sequence spans 108 residues: Replication restart protein PriB (108 aa).

In terms of domain architecture, SSB spans Val8–Glu108.

This sequence belongs to the PriB family. Homodimer. Interacts with PriA and DnaT. Component of the replication restart primosome. Primosome assembly occurs via a 'hand-off' mechanism. PriA binds to replication forks, subsequently PriB then DnaT bind; DnaT then displaces ssDNA to generate the helicase loading substrate.

Involved in the restart of stalled replication forks, which reloads the replicative helicase on sites other than the origin of replication; the PriA-PriB pathway is the major replication restart pathway. During primosome assembly it facilitates complex formation between PriA and DnaT on DNA; stabilizes PriA on DNA. Stimulates the DNA unwinding activity of PriA helicase. The chain is Replication restart protein PriB from Histophilus somni (strain 129Pt) (Haemophilus somnus).